We begin with the raw amino-acid sequence, 170 residues long: RNA pyrophosphohydrolase (170 aa).

The Nudix hydrolase domain maps to 6 to 149 (GFRPNVGIVI…KRDVYRRALK (144 aa)). The short motif at 38–59 (GGIDDGETPEQAMYRELYEEVG) is the Nudix box element.

It belongs to the Nudix hydrolase family. RppH subfamily. A divalent metal cation serves as cofactor.

Functionally, accelerates the degradation of transcripts by removing pyrophosphate from the 5'-end of triphosphorylated RNA, leading to a more labile monophosphorylated state that can stimulate subsequent ribonuclease cleavage. The protein is RNA pyrophosphohydrolase of Aliivibrio fischeri (strain ATCC 700601 / ES114) (Vibrio fischeri).